A 322-amino-acid chain; its full sequence is Acetyl-coenzyme A carboxylase carboxyl transferase subunit beta (322 aa).

The region spanning 24–293 (LWIKCPDTGQ…PAVEEPAVVD (270 aa)) is the CoA carboxyltransferase N-terminal domain.

The protein belongs to the AccD/PCCB family. Acetyl-CoA carboxylase is a heterohexamer composed of biotin carboxyl carrier protein (AccB), biotin carboxylase (AccC) and two subunits each of ACCase subunit alpha (AccA) and ACCase subunit beta (AccD).

It localises to the cytoplasm. The catalysed reaction is N(6)-carboxybiotinyl-L-lysyl-[protein] + acetyl-CoA = N(6)-biotinyl-L-lysyl-[protein] + malonyl-CoA. Its pathway is lipid metabolism; malonyl-CoA biosynthesis; malonyl-CoA from acetyl-CoA: step 1/1. Component of the acetyl coenzyme A carboxylase (ACC) complex. Biotin carboxylase (BC) catalyzes the carboxylation of biotin on its carrier protein (BCCP) and then the CO(2) group is transferred by the transcarboxylase to acetyl-CoA to form malonyl-CoA. The protein is Acetyl-coenzyme A carboxylase carboxyl transferase subunit beta of Rhodopseudomonas palustris (strain HaA2).